Here is a 701-residue protein sequence, read N- to C-terminus: Lutropin-choriogonadotropic hormone receptor (701 aa).

The first 26 residues, 1-26, serve as a signal peptide directing secretion; the sequence is MGRPSLALRLLLALLLLPPPAPLLWA. At 27–365 the chain is on the extracellular side; it reads LRPAPCPEPC…EDIMGYNFLR (339 aa). N-linked (GlcNAc...) asparagine glycosylation is present at N101. LRR repeat units lie at residues 124 to 149, 151 to 173, 174 to 198, 200 to 222, 223 to 246, and 250 to 271; these read LPRL…IFSS, FNFI…AFQG, MNNE…AFNG, TLIS…AFRG, ATGP…GLES, and LIAT…TNLL. N176 and N197 each carry an N-linked (GlcNAc...) asparagine glycan. 3 N-linked (GlcNAc...) asparagine glycosylation sites follow: N293, N301, and N315. Y333 carries the sulfotyrosine modification. The chain crosses the membrane as a helical span at residues 366 to 387; the sequence is VLIWLINILAITGNVTVLFVLL. At 388–397 the chain is on the cytoplasmic side; that stretch reads TSRYKLTVPR. The helical transmembrane segment at 398 to 418 threads the bilayer; that stretch reads FLMCNLSFADFCMGLYLLLIA. Over 419-441 the chain is Extracellular; that stretch reads SVDAQTKGQYYNHAIDWQTGSGC. A disulfide bridge connects residues C441 and C516. The helical transmembrane segment at 442–464 threads the bilayer; the sequence is SAAGFFTVFASELSVYTLTVITL. Topologically, residues 465-484 are cytoplasmic; sequence ERWHTITYAIQLDQKLRLKH. Residues 485–507 traverse the membrane as a helical segment; the sequence is AIPVMLGGWLFSTLIAVLPLVGV. Topologically, residues 508-527 are extracellular; that stretch reads SNYMKVSICLPMDVESTLSQ. The helical transmembrane segment at 528 to 551 threads the bilayer; sequence VYILTILILNVMAFIIICACYIKI. Residues 552–572 are Cytoplasmic-facing; sequence YFAVQNPELMATNKDTKIAKK. The helical transmembrane segment at 573–596 threads the bilayer; it reads MAVLIFTDFTCMAPISFFAISAAF. Residues 597 to 607 are Extracellular-facing; the sequence is KVPLITVTNSK. The helical transmembrane segment at 608–629 threads the bilayer; that stretch reads VLLVLFYPVNSCANPFLYAIFT. Topologically, residues 630 to 701 are cytoplasmic; it reads KAFQRDFFLL…VLDKTCYKEC (72 aa). 2 S-palmitoyl cysteine lipidation sites follow: C645 and C646.

It belongs to the G-protein coupled receptor 1 family. FSH/LSH/TSH subfamily. In terms of processing, sulfated.

Its subcellular location is the cell membrane. In terms of biological role, receptor for lutropin-choriogonadotropic hormone. The activity of this receptor is mediated by G proteins which activate adenylate cyclase. The sequence is that of Lutropin-choriogonadotropic hormone receptor (LHCGR) from Bos taurus (Bovine).